Here is a 547-residue protein sequence, read N- to C-terminus: Chaperonin GroEL (547 aa).

ATP-binding positions include 30 to 33 (TLGP), lysine 51, 87 to 91 (DGTTT), glycine 415, 479 to 481 (NAA), and aspartate 495. The interval 525-547 (PKEDKPDLGGGNPGGAGGMGGMM) is disordered. The segment covering 532–547 (LGGGNPGGAGGMGGMM) has biased composition (gly residues).

The protein belongs to the chaperonin (HSP60) family. In terms of assembly, forms a cylinder of 14 subunits composed of two heptameric rings stacked back-to-back. Interacts with the co-chaperonin GroES.

It localises to the cytoplasm. The catalysed reaction is ATP + H2O + a folded polypeptide = ADP + phosphate + an unfolded polypeptide.. Together with its co-chaperonin GroES, plays an essential role in assisting protein folding. The GroEL-GroES system forms a nano-cage that allows encapsulation of the non-native substrate proteins and provides a physical environment optimized to promote and accelerate protein folding. In Blochmanniella floridana, this protein is Chaperonin GroEL.